A 679-amino-acid chain; its full sequence is Probable metal-nicotianamine transporter YSL18 (679 aa).

The span at 1–17 (MESVGDPRDGPSTERAF) shows a compositional bias: basic and acidic residues. The interval 1–21 (MESVGDPRDGPSTERAFEGQP) is disordered. 14 helical membrane-spanning segments follow: residues 29–49 (VTLR…SVMM), 51–71 (LVFT…LGFF), 101–121 (CVVA…LLAM), 144–164 (FGRM…AIVP), 211–231 (LASL…NCGF), 255–275 (VGIG…GSII), 309–329 (VFCA…AISL), 379–399 (FAIS…PLMY), 407–427 (VAAA…GTGV), 441–461 (ILMF…SLVI), 497–517 (VIGT…FHHF), 547–567 (LPKY…AVCA), 593–613 (FLLV…VFLW), and 627–647 (VLAS…ALLA).

This sequence belongs to the YSL (TC 2.A.67.2) family.

The protein localises to the membrane. Functionally, may be involved in the transport of nicotianamine-chelated metals. The sequence is that of Probable metal-nicotianamine transporter YSL18 (YSL18) from Oryza sativa subsp. japonica (Rice).